The primary structure comprises 196 residues: Large ribosomal subunit protein mL66 (196 aa).

A mitochondrion-targeting transit peptide spans Met-1 to Gly-34.

This sequence belongs to the bacterial ribosomal protein bS18 family. Mitochondrion-specific ribosomal protein mL66 subfamily. In terms of assembly, component of the mitochondrial ribosome small subunit (28S) which comprises a 12S rRNA and about 30 distinct proteins.

It is found in the mitochondrion. This chain is Large ribosomal subunit protein mL66 (Mrps18a), found in Mus musculus (Mouse).